Consider the following 365-residue polypeptide: uncharacterized protein (365 aa).

Composition is skewed to basic and acidic residues over residues Met1–Ser27 and Ala315–Lys339. Disordered stretches follow at residues Met1–Gln31 and Lys308–Ser365. Positions Lys340–Gln353 are enriched in polar residues.

This sequence to yeast YGL082w. As to quaternary structure, interacts with sad1.

The protein localises to the cytoplasm. This is an uncharacterized protein from Schizosaccharomyces pombe (strain 972 / ATCC 24843) (Fission yeast).